Consider the following 912-residue polypeptide: Nonsense-mediated mRNA decay factor SMG8 (912 aa).

Positions 565–630 (EHSNRTPDAS…GEDEDETLEQ (66 aa)) are disordered. The span at 570–602 (TPDASTHPPMTNENSPHLSGSQKSQDSASNLTF) shows a compositional bias: polar residues. Residues 604–614 (MDEKRDEENKS) show a composition bias toward basic and acidic residues.

The protein belongs to the SMG8 family.

In terms of biological role, involved in nonsense-mediated decay (NMD) of mRNAs containing premature stop codons. Probable component of kinase complex containing SMG1 and recruited to stalled ribosomes. The sequence is that of Nonsense-mediated mRNA decay factor SMG8 from Culex quinquefasciatus (Southern house mosquito).